The sequence spans 31 residues: Monocyclic monoterpene ketone monooxygenase (31 aa).

20 to 25 (GAGFXG) contacts FAD.

As to quaternary structure, monomer. FAD serves as cofactor.

The catalysed reaction is 1-hydroxylimonen-2-one + NADPH + O2 = 3-isopropenyl-6-oxoheptanoate + NADP(+) + H2O. It carries out the reaction (1R,4S)-1-hydroxylimonen-2-one + NADPH + O2 + H(+) = (4S,7S)-7-hydroxy-4-isopropenyl-7-methyloxepan-2-one + NADP(+) + H2O. The enzyme catalyses (1S,4R)-1-hydroxylimonen-2-one + NADPH + O2 + H(+) = (4R,7R)-7-hydroxy-4-isopropenyl-7-methyloxepan-2-one + NADP(+) + H2O. It catalyses the reaction (1R,4R)-dihydrocarvone + NADPH + O2 + H(+) = (4R,7R)-4-isopropenyl-7-methyloxepan-2-one + NADP(+) + H2O. The catalysed reaction is (1S,4R)-menthone + NADPH + O2 + H(+) = (4S,7R)-7-isopropyl-4-methyloxepan-2-one + NADP(+) + H2O. It carries out the reaction (1R,4S)-menthone + NADPH + O2 + H(+) = (4R,7S)-7-isopropyl-4-methyloxepan-2-one + NADP(+) + H2O. The enzyme catalyses (1S,4R)-isodihydrocarvone + NADPH + O2 + H(+) = (3S,6R)-6-isopropenyl-3-methyloxepan-2-one + NADP(+) + H2O. It functions in the pathway terpene metabolism; monoterpene degradation. Catalyzes the NADPH- and oxygen-dependent oxidation of the monocyclic monoterpene ketones 1-hydroxy-2-oxolimonene, dihydrocarvone and menthone. Is able to convert all enantiomers of these natural substrates with almost equal efficiency. Is thus involved in the conversion of the monocyclic monoterpene ketone intermediates formed in the degradation pathways of all stereoisomers of three different monocyclic monoterpenes, i.e. limonene, (dihydro)carveol and menthol, which likely make R.erythropolis able to grow on these compounds as the sole source of carbon and energy. The polypeptide is Monocyclic monoterpene ketone monooxygenase (Rhodococcus erythropolis (Arthrobacter picolinophilus)).